The chain runs to 1139 residues: Liprin-alpha (1139 aa).

4 coiled-coil regions span residues 30 to 144 (PSDR…SLRM), 172 to 298 (EHHK…KNQI), 329 to 517 (IRDL…AQFQ), and 655 to 701 (QDAQ…EFYD). 2 disordered regions span residues 700-720 (YDDQ…LDNM) and 764-847 (NQFD…DRRK). Composition is skewed to polar residues over residues 704 to 719 (GIST…QLDN) and 778 to 787 (PASSVASSTD). SAM domains are found at residues 867–933 (WNGP…MVSL), 952–1016 (NHEY…LKKV), and 1040–1109 (WSNE…LVND).

It belongs to the liprin family. Liprin-alpha subfamily. In terms of tissue distribution, detected in vulval muscle and other cells near the vulva; in neurons located in the lateral ganglion, posterior ganglion, ventral cord and lateral body; and in pharyngeal and body wall muscle cells.

It localises to the synapse. Functionally, may play a role in regulating the structure of the neuronal region, called the active zone, from which synaptic vesicles send neurotransmitter signals across the synapse. This may be in association with the liprin-beta protein hlb-1. The sequence is that of Liprin-alpha from Caenorhabditis elegans.